We begin with the raw amino-acid sequence, 546 residues long: 2-isopropylmalate synthase (546 aa).

Residues 8 to 271 enclose the Pyruvate carboxyltransferase domain; that stretch reads ILIFDTTLRD…NSFFGRSSDS (264 aa). Positions 17, 208, 210, and 244 each coordinate Mn(2+). The segment at 408–546 is regulatory domain; sequence QLSHVQVSCG…KNKVLSNPKK (139 aa).

It belongs to the alpha-IPM synthase/homocitrate synthase family. LeuA type 1 subfamily. Homodimer. Mn(2+) serves as cofactor.

It is found in the cytoplasm. It catalyses the reaction 3-methyl-2-oxobutanoate + acetyl-CoA + H2O = (2S)-2-isopropylmalate + CoA + H(+). It participates in amino-acid biosynthesis; L-leucine biosynthesis; L-leucine from 3-methyl-2-oxobutanoate: step 1/4. In terms of biological role, catalyzes the condensation of the acetyl group of acetyl-CoA with 3-methyl-2-oxobutanoate (2-ketoisovalerate) to form 3-carboxy-3-hydroxy-4-methylpentanoate (2-isopropylmalate). The sequence is that of 2-isopropylmalate synthase from Prochlorococcus marinus subsp. pastoris (strain CCMP1986 / NIES-2087 / MED4).